A 1321-amino-acid polypeptide reads, in one-letter code: C-Jun-amino-terminal kinase-interacting protein 4 (1321 aa).

Residue Met1 is modified to N-acetylmethionine. Positions 7–95 constitute an RH1 domain; sequence VVYQEEPGGS…ITQYEREKAL (89 aa). A coiled-coil region spans residues 66 to 166; it reads AQDQEHQVEL…NALHQRHTEM (101 aa). A phosphoserine mark is found at Ser109, Ser183, Ser185, Ser194, and Ser203. The interval 203 to 308 is disordered; sequence SLGIFPLPAG…EGFVKGTDTS (106 aa). Position 217 is a phosphothreonine (Thr217). A compositionally biased stretch (polar residues) spans 236 to 248; sequence ELSQPRSHTSLKV. 5 positions are modified to phosphoserine: Ser238, Ser251, Ser265, Ser268, and Ser272. Residues 266 to 285 show a composition bias toward polar residues; it reads DISQGGSKATTPASTANSDV. Thr292 carries the post-translational modification Phosphothreonine. Phosphoserine occurs at positions 311, 329, 332, and 347. Residues 322–332 show a composition bias toward polar residues; it reads AQETRNVSTES. Positions 322 to 341 are disordered; that stretch reads AQETRNVSTESGENEEKSEV. A phosphothreonine mark is found at Thr348, Thr365, and Thr418. Residues 408–534 adopt a coiled-coil conformation; that stretch reads REVENLILEN…LQEAVRWTEM (127 aa). Residues 473-489 show a composition bias toward basic and acidic residues; sequence LRKARAEAEDARQKAKD. 2 disordered regions span residues 473 to 500 and 563 to 600; these read LRKA…TAQR and SSNA…SQLP. An RH2 domain is found at 500–604; sequence RKRFTRVEMA…TLSQLPGDKS (105 aa). Thr586 carries the phosphothreonine modification. Position 588 is a phosphoserine (Ser588). At Thr595 the chain carries Phosphothreonine. Ser705, Ser728, Ser730, Ser732, and Ser733 each carry phosphoserine. A coiled-coil region spans residues 724–758; sequence SKQRSASQSSLDKLDQELKEQQKEFKNQEELSSQV. The disordered stretch occupies residues 853 to 883; the sequence is TGAATSPSTNGASPVIEKPPEMETENSEVDE. Residues 855 to 864 show a composition bias toward polar residues; sequence AATSPSTNGA. A compositionally biased stretch (acidic residues) spans 874–883; sequence METENSEVDE. Ser1188 is modified (phosphoserine). The interval 1239–1267 is disordered; it reads PQSSSGGADLTADKAGSSAQEPSSQTPLK. The segment covering 1255-1266 has biased composition (polar residues); sequence SSAQEPSSQTPL. At Thr1264 the chain carries Phosphothreonine.

It belongs to the JIP scaffold family. In terms of assembly, homodimer. The homodimer interacts with ARF6, forming a heterotetramer. Homooligomer. Interacts with MAX, MAPK8, MAPK14, MAP3K3, MYC, and MAP2K4. Interacts with KNS2. Interaction with KNS2 is important in the formation of ternary complex with MAPK8. Interacts with PIP4P1. Interacts with PIKFYVE. In terms of processing, phosphorylated by MAPK8 and MAPK14. Highly expressed in brain, kidney, liver, heart.

It localises to the cytoplasm. The protein resides in the perinuclear region. It is found in the lysosome membrane. Functionally, the JNK-interacting protein (JIP) group of scaffold proteins selectively mediates JNK signaling by aggregating specific components of the MAPK cascade to form a functional JNK signaling module. Regulates lysosomal positioning by acting as an adapter protein which links PIP4P1-positive lysosomes to the dynein-dynactin complex. Assists PIKFYVE selective functionality in microtubule-based endosome-to-TGN trafficking. In Mus musculus (Mouse), this protein is C-Jun-amino-terminal kinase-interacting protein 4.